Reading from the N-terminus, the 279-residue chain is Prepilin leader peptidase/N-methyltransferase (279 aa).

The Periplasmic segment spans residues Met-1–Phe-16. The chain crosses the membrane as a helical span at residues Gly-17 to Tyr-35. At Arg-36–Ser-104 the chain is on the cytoplasmic side. A helical membrane pass occupies residues Val-105–Leu-123. At Leu-124 to Ala-130 the chain is on the periplasmic side. Residues Leu-131 to Ile-149 form a helical membrane-spanning segment. Over Lys-150–Leu-163 the chain is Cytoplasmic. A helical membrane pass occupies residues Trp-164 to Val-182. Topologically, residues Val-183–Ala-185 are periplasmic. Residues Met-186–Gly-204 traverse the membrane as a helical segment. Residues Lys-205–Lys-214 lie on the Cytoplasmic side of the membrane. The chain crosses the membrane as a helical span at residues Leu-215–Leu-233. The Periplasmic segment spans residues Val-234–Ala-236. The chain crosses the membrane as a helical span at residues Leu-237–Thr-254. The Cytoplasmic portion of the chain corresponds to Ala-255–Pro-257. Residues Leu-258–Gly-276 form a helical membrane-spanning segment. The Periplasmic segment spans residues Phe-277 to Leu-279.

Belongs to the peptidase A24 family.

It localises to the cell inner membrane. The enzyme catalyses Typically cleaves a -Gly-|-Phe- bond to release an N-terminal, basic peptide of 5-8 residues from type IV prepilin, and then N-methylates the new N-terminal amino group, the methyl donor being S-adenosyl-L-methionine.. Plays a role in type II pseudopili formation by proteolytically removing the leader sequence from substrate proteins and subsequently monomethylating the alpha-amino group of the newly exposed N-terminal phenylalanine. Substrates include proteins required for biogenesis of the type II general secretory apparatus. This is Prepilin leader peptidase/N-methyltransferase (outO) from Pectobacterium carotovorum subsp. carotovorum (Erwinia carotovora subsp. carotovora).